A 311-amino-acid polypeptide reads, in one-letter code: Ribosomal protein L11 methyltransferase (311 aa).

Residues T162, G183, D205, and N248 each coordinate S-adenosyl-L-methionine.

This sequence belongs to the methyltransferase superfamily. PrmA family.

Its subcellular location is the cytoplasm. The enzyme catalyses L-lysyl-[protein] + 3 S-adenosyl-L-methionine = N(6),N(6),N(6)-trimethyl-L-lysyl-[protein] + 3 S-adenosyl-L-homocysteine + 3 H(+). In terms of biological role, methylates ribosomal protein L11. The protein is Ribosomal protein L11 methyltransferase of Bacillus licheniformis (strain ATCC 14580 / DSM 13 / JCM 2505 / CCUG 7422 / NBRC 12200 / NCIMB 9375 / NCTC 10341 / NRRL NRS-1264 / Gibson 46).